The primary structure comprises 447 residues: MSHQRPEIFDNFAGAQVMTVDGEPQRDLNQARRIVLEMKEPLCRIPEDLRSLLSVTISVYCIETPSALVSTIIKNMPPEASIALVTGCRFLAVRDGPRGKTVTVLSTAFLSGLDESVTQQLFIHADTLLLTPEARSRISLLQDIIEDPPTSFETVGHIAHYNLREAHLPYRYFIGAVTCEKEPAITTVITKIDTVQSQYRTYNFELIGGVPRYDVKLVQDGITYSFNYTKVYWNSRLSHEHLSLAQHINQTICPNDLVLDGTCGIGPHALLLAKRFNFTNLICNDLNPDAYKSLKMNVRINKAENAITCFNEDVSSLLRRLLPETNLKAVIFSLPELSINLLQAMKGVPDIYCFLECFTRAPPHLAYYDLLLRCSESLLDTKVCTGIQQALSDIEKVAENKELIDLLIACYETFEVKEIRTVSTNKFMYRVTLKINEQKETVKVLKK.

Residues His241, Asp285–Leu286, and Asp313–Val314 contribute to the S-adenosyl-L-methionine site.

The protein belongs to the class I-like SAM-binding methyltransferase superfamily. TRM5/TYW2 family. As to quaternary structure, monomer.

The protein localises to the mitochondrion matrix. It localises to the nucleus. The protein resides in the cytoplasm. The enzyme catalyses guanosine(37) in tRNA + S-adenosyl-L-methionine = N(1)-methylguanosine(37) in tRNA + S-adenosyl-L-homocysteine + H(+). Functionally, specifically methylates the N1 position of guanosine-37 in various cytoplasmic and mitochondrial tRNAs. Methylation is not dependent on the nature of the nucleoside 5' of the target nucleoside. This is the first step in the biosynthesis of wybutosine (yW), a modified base adjacent to the anticodon of tRNAs and required for accurate decoding. The chain is tRNA (guanine(37)-N(1))-methyltransferase from Giardia intestinalis (strain ATCC 50803 / WB clone C6) (Giardia lamblia).